Reading from the N-terminus, the 214-residue chain is Cytochrome b (214 aa).

4 helical membrane-spanning segments follow: residues 31 to 51 (FGSM…FLAI), 75 to 96 (WIMQ…YIHI), 111 to 131 (WLSG…GYVL), and 176 to 196 (FFAL…IHIL). Positions 81 and 95 each coordinate heme b. Residues histidine 180 and histidine 194 each coordinate heme b. Position 199 (histidine 199) interacts with a ubiquinone.

The protein belongs to the cytochrome b family. The cytochrome bc1 complex contains 3 respiratory subunits (MT-CYB, CYC1 and UQCRFS1), 2 core proteins (UQCRC1 and UQCRC2) and probably 6 low-molecular weight proteins. Heme b is required as a cofactor.

It localises to the mitochondrion inner membrane. Functionally, component of the ubiquinol-cytochrome c reductase complex (complex III or cytochrome b-c1 complex) that is part of the mitochondrial respiratory chain. The b-c1 complex mediates electron transfer from ubiquinol to cytochrome c. Contributes to the generation of a proton gradient across the mitochondrial membrane that is then used for ATP synthesis. The protein is Cytochrome b (MT-CYB) of Trimeresurus stejnegeri (Chinese green tree viper).